The following is a 349-amino-acid chain: MSDFNTLRWLHGQPQGQGRLKVSPTDFQVVEDLGFAPDGDGEHLLVRIRKTGCNTRAVADALAKFLGIAAREVSFAGQKDKYAVTEQWLCARLPGKEMPAMRAFTLEGCEVLEFARHRRKLRLGALKGNRFSLVLRDITHRDEIEQRLSLISEKGVPNYFGPQRFGRGGSNIYQAKRWAQTGQPPRERNKRGFALSAARSLMFNTLVSERLQRFGVNQVMDGDALQLAGRGSWFVTTPEELTDLQARVDSGELLITAALPGSGDWGTQRAALAFEQATLADETELLTLLTREKVEAARRAMLLFPRELRWQWQDDATLEVSFWLPAGSFATSVIRELFNTADDVSDISE.

Position 27 (F27) interacts with substrate. The Nucleophile role is filled by D80. N129 is a substrate binding site. The 149-residue stretch at 155–303 (GVPNYFGPQR…VEAARRAMLL (149 aa)) folds into the TRUD domain. A substrate-binding site is contributed by F329.

The protein belongs to the pseudouridine synthase TruD family.

The catalysed reaction is uridine(13) in tRNA = pseudouridine(13) in tRNA. In terms of biological role, responsible for synthesis of pseudouridine from uracil-13 in transfer RNAs. The sequence is that of tRNA pseudouridine synthase D from Cronobacter sakazakii (strain ATCC BAA-894) (Enterobacter sakazakii).